Consider the following 510-residue polypeptide: ATP synthase subunit alpha (510 aa).

169 to 176 (GDRQTGKT) contacts ATP.

This sequence belongs to the ATPase alpha/beta chains family. As to quaternary structure, F-type ATPases have 2 components, CF(1) - the catalytic core - and CF(0) - the membrane proton channel. CF(1) has five subunits: alpha(3), beta(3), gamma(1), delta(1), epsilon(1). CF(0) has three main subunits: a(1), b(2) and c(9-12). The alpha and beta chains form an alternating ring which encloses part of the gamma chain. CF(1) is attached to CF(0) by a central stalk formed by the gamma and epsilon chains, while a peripheral stalk is formed by the delta and b chains.

The protein localises to the cell inner membrane. The enzyme catalyses ATP + H2O + 4 H(+)(in) = ADP + phosphate + 5 H(+)(out). Produces ATP from ADP in the presence of a proton gradient across the membrane. The alpha chain is a regulatory subunit. The protein is ATP synthase subunit alpha of Anaeromyxobacter dehalogenans (strain 2CP-1 / ATCC BAA-258).